Reading from the N-terminus, the 119-residue chain is Large ribosomal subunit protein bL20 (119 aa).

Belongs to the bacterial ribosomal protein bL20 family.

Binds directly to 23S ribosomal RNA and is necessary for the in vitro assembly process of the 50S ribosomal subunit. It is not involved in the protein synthesizing functions of that subunit. This is Large ribosomal subunit protein bL20 from Bradyrhizobium sp. (strain BTAi1 / ATCC BAA-1182).